Consider the following 634-residue polypeptide: UPF0329 protein ECU07_1850/ECU10_0050 (634 aa).

2 stretches are compositionally biased toward basic and acidic residues: residues 354 to 365 (REEREKREESKG) and 397 to 407 (GESKEEDRGEE). The interval 354 to 438 (REEREKREES…KGSGEKRISE (85 aa)) is disordered. The span at 408-417 (GGVEAEDPLE) shows a compositional bias: acidic residues.

Belongs to the UPF0329 family.

This Encephalitozoon cuniculi (strain GB-M1) (Microsporidian parasite) protein is UPF0329 protein ECU07_1850/ECU10_0050.